Reading from the N-terminus, the 655-residue chain is Very long-chain specific acyl-CoA dehydrogenase, mitochondrial (655 aa).

Residues 1 to 40 (MRAARMAQSTGRQLLRLRGVSSWPGELLGQPRPGPARRPY) constitute a mitochondrion transit peptide. The interval 22-66 (SWPGELLGQPRPGPARRPYASGVAQAAVDQSDSQPSEASTREKRA) is disordered. Residues 41-482 (ASGVAQAAVD…ALQGCMDKGK (442 aa)) are catalytic. A compositionally biased stretch (polar residues) spans 49 to 59 (VDQSDSQPSEA). K71 carries the post-translational modification N6-acetyllysine; alternate. K71 bears the N6-succinyllysine; alternate mark. Position 195 is an N6-succinyllysine (K195). 214-223 (FCLTEPSSGS) contacts FAD. C237 is modified (S-nitrosocysteine). The residue at position 239 (K239) is an N6-acetyllysine; alternate. K239 is subject to N6-succinyllysine; alternate. Residue 249-251 (WIS) coordinates FAD. K276 and K278 each carry N6-acetyllysine; alternate. K276 and K278 each carry N6-succinyllysine; alternate. At K298 the chain carries N6-acetyllysine. The residue at position 331 (K331) is an N6-acetyllysine; alternate. Position 331 is an N6-succinyllysine; alternate (K331). At K372 the chain carries N6-succinyllysine. 461 to 463 (FEG) contacts substrate. E462 functions as the Proton acceptor in the catalytic mechanism. 464 to 466 (TND) contributes to the FAD binding site. K482 is modified (N6-acetyllysine; alternate). K482 carries the N6-succinyllysine; alternate modification. Residues 483-516 (ELSGLGNALKNPFGNAGLLLGEAGKQLRRRAGLG) form a membrane-anchoring region. A phosphoserine mark is found at S517 and S522. K550 carries the N6-acetyllysine modification. An N6-acetyllysine; alternate modification is found at K556. K556 is subject to N6-succinyllysine; alternate. Q562 serves as a coordination point for FAD. At K639 the chain carries N6-succinyllysine.

It belongs to the acyl-CoA dehydrogenase family. In terms of assembly, homodimer. Homodimerizes after import into the mitochondrion. It depends on FAD as a cofactor. In terms of processing, S-nitrosylation at Cys-237 in liver improves catalytic efficiency.

Its subcellular location is the mitochondrion inner membrane. The catalysed reaction is a very-long-chain 2,3-saturated fatty acyl-CoA + oxidized [electron-transfer flavoprotein] + H(+) = a very-long-chain (2E)-enoyl-CoA + reduced [electron-transfer flavoprotein]. It carries out the reaction dodecanoyl-CoA + oxidized [electron-transfer flavoprotein] + H(+) = (2E)-dodecenoyl-CoA + reduced [electron-transfer flavoprotein]. It catalyses the reaction tetradecanoyl-CoA + oxidized [electron-transfer flavoprotein] + H(+) = (2E)-tetradecenoyl-CoA + reduced [electron-transfer flavoprotein]. The enzyme catalyses oxidized [electron-transfer flavoprotein] + hexadecanoyl-CoA + H(+) = (2E)-hexadecenoyl-CoA + reduced [electron-transfer flavoprotein]. The catalysed reaction is octadecanoyl-CoA + oxidized [electron-transfer flavoprotein] + H(+) = (2E)-octadecenoyl-CoA + reduced [electron-transfer flavoprotein]. It carries out the reaction eicosanoyl-CoA + oxidized [electron-transfer flavoprotein] + H(+) = (2E)-eicosenoyl-CoA + reduced [electron-transfer flavoprotein]. It catalyses the reaction docosanoyl-CoA + oxidized [electron-transfer flavoprotein] + H(+) = (2E)-docosenoyl-CoA + reduced [electron-transfer flavoprotein]. The enzyme catalyses tetracosanoyl-CoA + oxidized [electron-transfer flavoprotein] + H(+) = (2E)-tetracosenoyl-CoA + reduced [electron-transfer flavoprotein]. It functions in the pathway lipid metabolism; mitochondrial fatty acid beta-oxidation. Functionally, very long-chain specific acyl-CoA dehydrogenase is one of the acyl-CoA dehydrogenases that catalyze the first step of mitochondrial fatty acid beta-oxidation, an aerobic process breaking down fatty acids into acetyl-CoA and allowing the production of energy from fats. The first step of fatty acid beta-oxidation consists in the removal of one hydrogen from C-2 and C-3 of the straight-chain fatty acyl-CoA thioester, resulting in the formation of trans-2-enoyl-CoA. Among the different mitochondrial acyl-CoA dehydrogenases, very long-chain specific acyl-CoA dehydrogenase acts specifically on acyl-CoAs with saturated 12 to 24 carbons long primary chains. This is Very long-chain specific acyl-CoA dehydrogenase, mitochondrial from Bos taurus (Bovine).